The chain runs to 360 residues: Peptide chain release factor 1 (360 aa).

Gln-236 carries the N5-methylglutamine modification.

The protein belongs to the prokaryotic/mitochondrial release factor family. Methylated by PrmC. Methylation increases the termination efficiency of RF1.

It localises to the cytoplasm. In terms of biological role, peptide chain release factor 1 directs the termination of translation in response to the peptide chain termination codons UAG and UAA. This is Peptide chain release factor 1 from Lactiplantibacillus plantarum (strain ATCC BAA-793 / NCIMB 8826 / WCFS1) (Lactobacillus plantarum).